Here is a 403-residue protein sequence, read N- to C-terminus: Prostaglandin D2 receptor 2 (403 aa).

The Extracellular segment spans residues 1-34 (MANITLKPLCPLLEEMVQLPNHSNSSLRYIDHVS). 3 N-linked (GlcNAc...) asparagine glycosylation sites follow: Asn-3, Asn-21, and Asn-24. Residues 35–55 (VLLHGLASLLGLVENGLILFV) form a helical membrane-spanning segment. Residues 56 to 71 (VGCRMRQTVVTTWVLH) lie on the Cytoplasmic side of the membrane. Residues 72-92 (LALSDLLAAASLPFFTYFLAV) form a helical membrane-spanning segment. Residues 93–104 (GHSWELGTTFCK) lie on the Extracellular side of the membrane. Cys-103 and Cys-198 are oxidised to a cystine. Residues 105–125 (LHSSVFFLNMFASGFLLSAIS) form a helical membrane-spanning segment. Residues 126 to 147 (LDRCLQVVRPVWAQNHRTVAAA) lie on the Cytoplasmic side of the membrane. The helical transmembrane segment at 148-168 (HRVCLMLWALAVLNTVPYFVF) threads the bilayer. Residues 169–209 (RDTIPRRDGRIMCYYNMLLLNPGSDRDTTCDYRQKALAVSK) lie on the Extracellular side of the membrane. A helical transmembrane segment spans residues 210 to 230 (FLLAFMVPLAIIASSHVAVSL). At 231–245 (QLHHRGRQRTGRFVR) the chain is on the cytoplasmic side. Residues 246 to 266 (LVAAIVVAFILCWGPYHIFSL) form a helical membrane-spanning segment. Topologically, residues 267 to 284 (LEARAHSVTTLRQLASRG) are extracellular. The chain crosses the membrane as a helical span at residues 285–305 (LPFVTSLAFFNSVVNPLLYVL). Residues 306–403 (TCPDMLHKLR…KQGSLSCTLD (98 aa)) are Cytoplasmic-facing. The short motif at 329–332 (DSDL) is the Involved in the recycling of CRTH2 element. Ser-330 carries the post-translational modification Phosphoserine. 2 disordered regions span residues 332–353 (LSTG…STTT) and 384–403 (PRRV…CTLD). Residues 338–348 (KRCRRRHRRRA) are compositionally biased toward basic residues. Residue Ser-349 is modified to Phosphoserine. The span at 393–403 (EKQGSLSCTLD) shows a compositional bias: polar residues.

Belongs to the G-protein coupled receptor 1 family. Phosphorylated.

The protein resides in the cell membrane. Its function is as follows. Receptor for prostaglandin D2 (PGD2). Coupled to the G(i)-protein. Receptor activation may result in pertussis toxin-sensitive decreases in cAMP levels and Ca(2+) mobilization. PI3K signaling is also implicated in mediating PTGDR2 effects. PGD2 induced receptor internalization. CRTH2 internalization can be regulated by diverse kinases such as, PKC, PKA, GRK2, GPRK5/GRK5 and GRK6. Receptor activation is responsible, at least in part, in immune regulation and allergic/inflammation responses. The chain is Prostaglandin D2 receptor 2 (Ptgdr2) from Rattus norvegicus (Rat).